The chain runs to 389 residues: Chalcone synthase 1 (389 aa).

The active site involves Cys164.

Belongs to the thiolase-like superfamily. Chalcone/stilbene synthases family.

The catalysed reaction is (E)-4-coumaroyl-CoA + 3 malonyl-CoA + 3 H(+) = 2',4,4',6'-tetrahydroxychalcone + 3 CO2 + 4 CoA. It participates in secondary metabolite biosynthesis; flavonoid biosynthesis. Functionally, the primary product of this enzyme is 4,2',4',6'-tetrahydroxychalcone (also termed naringenin-chalcone or chalcone) which can under specific conditions spontaneously isomerize into naringenin. The protein is Chalcone synthase 1 (CHS1) of Trifolium subterraneum (Subterranean clover).